A 162-amino-acid polypeptide reads, in one-letter code: MLSLKSPAVLLSMVILVPLFALAVKQPYEYDFFMWNGAQEEYEKAHGHIPFEPAHVGADDFDKRIPEFKNKLLETAVVTGKLKGAIKIGVRGSRAQGNRAIWFTTIVHPEDSVGKEMDLQHELALILWRQEAYRKSLLWIDMVPIRGVHWGLQDLNTVLRHF.

Positions 1–23 (MLSLKSPAVLLSMVILVPLFALA) are cleaved as a signal peptide.

This is an uncharacterized protein from Mycosarcoma maydis (Corn smut fungus).